The following is a 246-amino-acid chain: ATP synthase subunit a, chloroplastic (246 aa).

5 consecutive transmembrane segments (helical) span residues 35–55 (GQVL…GLIA), 94–114 (VPFI…GALL), 132–152 (DINT…YAGI), 198–218 (LVVG…VMLL), and 219–239 (GVFT…AYIG).

Belongs to the ATPase A chain family. F-type ATPases have 2 components, CF(1) - the catalytic core - and CF(0) - the membrane proton channel. CF(1) has five subunits: alpha(3), beta(3), gamma(1), delta(1), epsilon(1). CF(0) has four main subunits: a, b, b' and c.

It localises to the plastid. Its subcellular location is the chloroplast thylakoid membrane. In terms of biological role, key component of the proton channel; it plays a direct role in the translocation of protons across the membrane. This chain is ATP synthase subunit a, chloroplastic, found in Stigeoclonium helveticum (Green alga).